A 592-amino-acid polypeptide reads, in one-letter code: Probable auxin efflux carrier component 1c (592 aa).

At 1–6 the chain is on the extracellular side; sequence MITGAD. Residues 7-27 form a helical membrane-spanning segment; that stretch reads FYHVMTAMVPLYVAMILAYGS. Residues 28-38 are Cytoplasmic-facing; it reads VKWWRIFTPDQ. The helical transmembrane segment at 39–59 threads the bilayer; the sequence is CSGINRFVALFAVPLLSFHFI. Residue V51 participates in (indol-3-yl)acetate binding. Topologically, residues 60–70 are extracellular; it reads STNNPYTMNLR. The chain crosses the membrane as a helical span at residues 71–91; the sequence is FIAADTLQKLIVLALLTLWSH. Residues 92-100 are Cytoplasmic-facing; the sequence is LSRRGSLEW. A helical transmembrane segment spans residues 101–121; it reads TITLFSLSTLPNTLVMGIPLL. (indol-3-yl)acetate-binding residues include N112 and L114. Over 122 to 131 the chain is Extracellular; the sequence is KGMYGEFSGS. The helical transmembrane segment at 132 to 152 threads the bilayer; sequence LMVQIVVLQCIIWYTLMLFMF. Y145 contributes to the (indol-3-yl)acetate binding site. The Cytoplasmic portion of the chain corresponds to 153–452; that stretch reads EYRGARILIT…LIRNPNTYSS (300 aa). 2 disordered regions span residues 214-236 and 282-331; these read RSDVYSRRSMGFSSTTPRPSNLT and GATP…AKGE. Residues 224–236 are compositionally biased toward polar residues; the sequence is GFSSTTPRPSNLT. Over residues 309 to 318 the composition is skewed to pro residues; the sequence is APNPAMAAPP. A helical membrane pass occupies residues 453-473; sequence LIGLIWSLVCFRWNFEMPAII. The Extracellular segment spans residues 474–476; the sequence is LKS. A helical transmembrane segment spans residues 477-497; the sequence is ISILSDAGLGMAMFSLGLFMA. At 498-511 the chain is on the cytoplasmic side; it reads LQPRIIACGNKVAT. The chain crosses the membrane as a helical span at residues 512–532; the sequence is FAMAVRFLTGPAVMAAASIAV. Residues 533 to 537 are Extracellular-facing; it reads GLRGT. Residues 538-558 form a helical membrane-spanning segment; sequence LLHVAIVQAALPQGIVPFVFA. Residues I552 and V553 each coordinate (indol-3-yl)acetate. Topologically, residues 559–571 are cytoplasmic; the sequence is KEYSVHPDILSTA. Residues 572-592 traverse the membrane as a helical segment; the sequence is VIFGMLIALPITLVYYILLGL.

It belongs to the auxin efflux carrier (TC 2.A.69.1) family. Homodimer. In terms of tissue distribution, expressed at low levels in roots and leaves. Expressed in roots, stem bases, stems, leaves and young panicles.

It localises to the membrane. Functionally, may act as a component of the auxin efflux carrier. This is Probable auxin efflux carrier component 1c from Oryza sativa subsp. japonica (Rice).